The following is a 142-amino-acid chain: Large ribosomal subunit protein uL13 (142 aa).

It belongs to the universal ribosomal protein uL13 family. In terms of assembly, part of the 50S ribosomal subunit.

In terms of biological role, this protein is one of the early assembly proteins of the 50S ribosomal subunit, although it is not seen to bind rRNA by itself. It is important during the early stages of 50S assembly. In Histophilus somni (strain 129Pt) (Haemophilus somnus), this protein is Large ribosomal subunit protein uL13.